The sequence spans 243 residues: 3-deoxy-manno-octulosonate cytidylyltransferase (243 aa).

This sequence belongs to the KdsB family.

Its subcellular location is the cytoplasm. It catalyses the reaction 3-deoxy-alpha-D-manno-oct-2-ulosonate + CTP = CMP-3-deoxy-beta-D-manno-octulosonate + diphosphate. It participates in nucleotide-sugar biosynthesis; CMP-3-deoxy-D-manno-octulosonate biosynthesis; CMP-3-deoxy-D-manno-octulosonate from 3-deoxy-D-manno-octulosonate and CTP: step 1/1. Its pathway is bacterial outer membrane biogenesis; lipopolysaccharide biosynthesis. In terms of biological role, activates KDO (a required 8-carbon sugar) for incorporation into bacterial lipopolysaccharide in Gram-negative bacteria. This chain is 3-deoxy-manno-octulosonate cytidylyltransferase, found in Helicobacter pylori (strain HPAG1).